The sequence spans 170 residues: Peptidyl-prolyl cis-trans isomerase-like 3 (170 aa).

One can recognise a PPIase cyclophilin-type domain in the interval 1–160 (MSVTLHTDLG…QEFRIKSVTI (160 aa)).

Belongs to the cyclophilin-type PPIase family. PPIL3 subfamily.

The catalysed reaction is [protein]-peptidylproline (omega=180) = [protein]-peptidylproline (omega=0). Functionally, PPIases accelerate the folding of proteins. It catalyzes the cis-trans isomerization of proline imidic peptide bonds in oligopeptides. The polypeptide is Peptidyl-prolyl cis-trans isomerase-like 3 (cyp4) (Rhizopus delemar (strain RA 99-880 / ATCC MYA-4621 / FGSC 9543 / NRRL 43880) (Mucormycosis agent)).